Consider the following 27-residue polypeptide: Conotoxin (27 aa).

Intrachain disulfides connect Cys2–Cys16, Cys6–Cys18, and Cys12–Cys23. Position 27 is an asparagine amide (Asn27).

In terms of tissue distribution, expressed by the venom duct.

The protein localises to the secreted. In terms of biological role, probable neurotoxin that inhibits ion channels. The protein is Conotoxin of Conus amadis (Amadis cone).